Reading from the N-terminus, the 178-residue chain is MINSVDLAIGTAILLIGMAYWTVSIVEHNNNYVDIVKSDYIFDKGISTMEHLSEDGTLQDAVLLYYFDRVNDSKKLLEERIPLKHYLLYIDNNLLINKSNGVNNSNSVYILTVLTLNRSEGWYVIYGNEDFVNISKERFLDYDDAYNYLKYRNYDIHMPVYLSKNVSSSRVELYILGN.

The chain crosses the membrane as a helical span at residues 7 to 27; it reads LAIGTAILLIGMAYWTVSIVE.

It localises to the membrane. This is an uncharacterized protein from Methanocaldococcus jannaschii (strain ATCC 43067 / DSM 2661 / JAL-1 / JCM 10045 / NBRC 100440) (Methanococcus jannaschii).